We begin with the raw amino-acid sequence, 1680 residues long: RAF-like serine/threonine-protein kinase PRAF (1680 aa).

Residues 86–163 are disordered; it reads FSPSDPHNSV…TPSDDGKDFP (78 aa). A PB1 domain is found at 166-267; it reads RVKFMCSFGG…SRLRVFLFPA (102 aa). Disordered stretches follow at residues 363–388, 417–516, 556–580, 594–613, 641–672, 700–725, and 1186–1226; these read LTGNLSNRSNAPSAPSSAPSSPPLLA, PQYT…DSQQ, PDMLQSSGAQPAVSGQQQQGYQPQQ, GANHEGAYRQGDQQQQSQQF, QSTSYHGSAPSSPRPGFRELPSRHLPGGPQLQ, RSFRLSSSPPRYRDHHPHSEERLHRQ, and LPNA…LGGQ. Positions 366–388 are enriched in low complexity; the sequence is NLSNRSNAPSAPSSAPSSPPLLA. The span at 446–482 shows a compositional bias: basic and acidic residues; that stretch reads HEMHYRSTDSRRGPESPPKKFHDALHQDHPITVEQRR. Composition is skewed to low complexity over residues 560–580 and 603–613; these read QSSGAQPAVSGQQQQGYQPQQ and QGDQQQQSQQF. Positions 641-651 are enriched in polar residues; it reads QSTSYHGSAPS. Positions 1204–1217 are enriched in low complexity; sequence SRSSSSSLSELSKS. Phosphoserine is present on Ser1248. Residues 1339–1354 are compositionally biased toward basic and acidic residues; sequence ASTVDKENQEEVRTGL. A disordered region spans residues 1339-1372; that stretch reads ASTVDKENQEEVRTGLDEPADEDKANSTGLGSDP. Ser1365 bears the Phosphoserine mark. The Protein kinase domain occupies 1389–1655; sequence LEELRELGSG…SDIAKELRTM (267 aa). ATP is bound by residues 1395-1403 and Lys1416; that span reads LGSGTFGTV. The active-site Proton acceptor is Asp1518. Residues 1661–1680 are disordered; the sequence is PKTQAQTQGQSHPHPQMQIV.

The protein belongs to the protein kinase superfamily. Ser/Thr protein kinase family. Post-translationally, hyperphosphorylated in response to auxin. Its phosphorylation state is also rapidly stimulated by photosynthetic activity (e.g. in response to blue light and red light irradiation); dephosphorylated in the darkness.

It localises to the cytoplasm. It carries out the reaction L-seryl-[protein] + ATP = O-phospho-L-seryl-[protein] + ADP + H(+). The enzyme catalyses L-threonyl-[protein] + ATP = O-phospho-L-threonyl-[protein] + ADP + H(+). Its activity is regulated as follows. Activated by auxin via rapid phosphorylation. Regulated by photosynthesis-activity-dependent changes in its phosphorylation status. Functionally, RAF-like protein kinase acting as a central mediator of a fast response pathway to auxin involving proteins phosphorylation, and leading to rapid cellular responses including membrane depolarization and cytoplasmic streaming. Required for general growth and developmental process. Photosynthesis signaling kinase involved in the regulation of the sucrose metabolism involving PGM1. Necessary for optimal chloroplast electron transport rate (ETR). The chain is RAF-like serine/threonine-protein kinase PRAF from Marchantia polymorpha (Common liverwort).